The following is an 82-amino-acid chain: Cytochrome b559 subunit alpha (82 aa).

Residues 22 to 36 (VIHAVTLPSIFLAGY) traverse the membrane as a helical segment. H24 is a heme binding site.

This sequence belongs to the PsbE/PsbF family. In terms of assembly, heterodimer of an alpha subunit and a beta subunit. PSII is composed of 1 copy each of membrane proteins PsbA, PsbB, PsbC, PsbD, PsbE, PsbF, PsbH, PsbI, PsbJ, PsbK, PsbL, PsbM, PsbT, PsbX, PsbY, Psb30/Ycf12, peripheral proteins PsbO, CyanoQ (PsbQ), PsbU, PsbV and a large number of cofactors. It forms dimeric complexes. Heme b serves as cofactor.

The protein resides in the cellular thylakoid membrane. Its function is as follows. This b-type cytochrome is tightly associated with the reaction center of photosystem II (PSII). PSII is a light-driven water:plastoquinone oxidoreductase that uses light energy to abstract electrons from H(2)O, generating O(2) and a proton gradient subsequently used for ATP formation. It consists of a core antenna complex that captures photons, and an electron transfer chain that converts photonic excitation into a charge separation. The protein is Cytochrome b559 subunit alpha of Prochlorococcus marinus (strain MIT 9303).